The sequence spans 550 residues: MEGSHSSNMERLEYLYLNLVGQVVQVRLVDDMCVEGLFVACTDVDAETDAGIMICCTRNLASAKRSPLSPSCVNFTDDLFIPYQSIVMIEVQNAKIRTETPGRPDTGRADFSATKFDWADDGVSELLESEPHQTGTWNQFEANEKSFGVKTTYKEEFYTTRLDHSKITEEQRAQADRLAREIESSSTRGIAHRMEREECLHDDEGLDEGQLYSDVHRPQEKKPPYVPPSTGGRKLVNEPPPVPAAAAPATAPTTAPAAAPAPAAAPPAAAPAAAAPPPPPAATSMADDGSMRHKRMNEDPHHMQYDANQTAAGFNPAAAPYTPMKPGAAVPVVDFLASLADAISNNDMCYDCEPHWPGMCNLFYDQDDSSYSQQNYEAAAMPPSHSMNMHMYVNSQPNIPNAHRGYQGPLGRVPHNQSMPMHHMQGQGFHHEMHHHQAFHGMGNYSSQHHNPPIQEYAPHKGQQGVVSRPGMRQGKGGGASRVEPQQPVSANTASSPPPVPTVDSAPNEVKPPAKLQRGRGMAAFTKGDMDGDSGATTNATGGPKKRVGK.

In terms of domain architecture, Sm spans 11 to 95 (RLEYLYLNLV…IVMIEVQNAK (85 aa)). Disordered regions lie at residues 201 to 296 (HDDE…HKRM) and 441 to 550 (GMGN…RVGK). Positions 214 to 223 (DVHRPQEKKP) are enriched in basic and acidic residues. A compositionally biased stretch (low complexity) spans 244–262 (AAAAPATAPTTAPAAAPAP). Over residues 263-281 (AAAPPAAAPAAAAPPPPPA) the composition is skewed to pro residues.

It belongs to the ataxin-2 family. As to quaternary structure, forms a complex composed of at least MKT1, PBP1, XAC1 and LSM12. Forms a complex composed of at least MKT1L, PBP1, XAC1 and LSM12. Within the complex, interacts with MKT1 (via C-terminus); the interaction is direct. Interacts (via C-terminus) with ZC3H11; the interaction is direct.

It localises to the cytoplasm. The protein localises to the cytosol. Its subcellular location is the stress granule. Functionally, involved in post-transcriptional regulation of gene expression. Promotes mRNA stabilization by bridging poly(A)-binding protein to mRNAs. In Trypanosoma brucei brucei (strain 927/4 GUTat10.1), this protein is PAB1-binding protein 1.